Reading from the N-terminus, the 250-residue chain is LOB domain-containing protein 37 (250 aa).

Residues 1–107 (MSCNGCRVLR…VETVLRGGSL (107 aa)) enclose the LOB domain. Residues 145-227 (DSTDRNIYHH…DSGTTTTTTA (83 aa)) form a disordered region. Over residues 157–170 (FSSSRSRSTMDSSS) the composition is skewed to low complexity.

Belongs to the LOB domain-containing protein family. Expressed in young shoots, roots, stems, leaves and flowers.

This is LOB domain-containing protein 37 (LBD37) from Arabidopsis thaliana (Mouse-ear cress).